Consider the following 476-residue polypeptide: UDP-glycosyltransferase 71C3 (476 aa).

Residues Ser-290, 349-351 (APQ), 366-374 (HCGWNSVLE), and 388-391 (YAEQ) contribute to the UDP-alpha-D-glucose site.

The protein belongs to the UDP-glycosyltransferase family.

Possesses low quercetin 3-O-glucosyltransferase activity in vitro. The polypeptide is UDP-glycosyltransferase 71C3 (UGT71C3) (Arabidopsis thaliana (Mouse-ear cress)).